The following is a 111-amino-acid chain: Cytochrome b-c1 complex subunit 7 (111 aa).

Residue alanine 2 is modified to N-acetylalanine. Lysine 12 carries the post-translational modification N6-acetyllysine; alternate. Lysine 12 carries the N6-succinyllysine; alternate modification. Lysine 19 bears the N6-acetyllysine mark. The residue at position 78 (lysine 78) is an N6-acetyllysine; alternate. Residue lysine 78 is modified to N6-succinyllysine; alternate. 2 positions are modified to N6-acetyllysine: lysine 83 and lysine 96.

It belongs to the UQCRB/QCR7 family. As to quaternary structure, component of the ubiquinol-cytochrome c oxidoreductase (cytochrome b-c1 complex, complex III, CIII), a multisubunit enzyme composed of 11 subunits. The complex is composed of 3 respiratory subunits cytochrome b, cytochrome c1 and Rieske protein UQCRFS1, 2 core protein subunits UQCRC1/QCR1 and UQCRC2/QCR2, and 6 low-molecular weight protein subunits UQCRH/QCR6, UQCRB/QCR7, UQCRQ/QCR8, UQCR10/QCR9, UQCR11/QCR10 and subunit 9, the cleavage product of Rieske protein UQCRFS1. The complex exists as an obligatory dimer and forms supercomplexes (SCs) in the inner mitochondrial membrane with NADH-ubiquinone oxidoreductase (complex I, CI) and cytochrome c oxidase (complex IV, CIV), resulting in different assemblies (supercomplex SCI(1)III(2)IV(1) and megacomplex MCI(2)III(2)IV(2)).

The protein resides in the mitochondrion inner membrane. In terms of biological role, component of the ubiquinol-cytochrome c oxidoreductase, a multisubunit transmembrane complex that is part of the mitochondrial electron transport chain which drives oxidative phosphorylation. The respiratory chain contains 3 multisubunit complexes succinate dehydrogenase (complex II, CII), ubiquinol-cytochrome c oxidoreductase (cytochrome b-c1 complex, complex III, CIII) and cytochrome c oxidase (complex IV, CIV), that cooperate to transfer electrons derived from NADH and succinate to molecular oxygen, creating an electrochemical gradient over the inner membrane that drives transmembrane transport and the ATP synthase. The cytochrome b-c1 complex catalyzes electron transfer from ubiquinol to cytochrome c, linking this redox reaction to translocation of protons across the mitochondrial inner membrane, with protons being carried across the membrane as hydrogens on the quinol. In the process called Q cycle, 2 protons are consumed from the matrix, 4 protons are released into the intermembrane space and 2 electrons are passed to cytochrome c. The protein is Cytochrome b-c1 complex subunit 7 (UQCRB) of Homo sapiens (Human).